Consider the following 524-residue polypeptide: uncharacterized protein (524 aa).

Positions 1–26 (MLKIDMWFKLKSLGFSLISLQALLAS) are cleaved as a signal peptide. Cys-27 carries N-palmitoyl cysteine lipidation. Cys-27 carries S-diacylglycerol cysteine lipidation. The interval 37 to 68 (IEEKNDSTTDNNATPFKDEQSDQGTEVNQQPK) is disordered. Positions 58 to 68 (DQGTEVNQQPK) are enriched in polar residues.

This sequence belongs to the MG067/MG068/MG395 family.

It is found in the cell membrane. This is an uncharacterized protein from Mycoplasma genitalium (strain ATCC 33530 / DSM 19775 / NCTC 10195 / G37) (Mycoplasmoides genitalium).